Here is a 327-residue protein sequence, read N- to C-terminus: Spermidine/putrescine import ATP-binding protein PotA (327 aa).

The ABC transporter domain maps to Ile5–Ile235. Residue Gly37–Thr44 participates in ATP binding.

The protein belongs to the ABC transporter superfamily. Spermidine/putrescine importer (TC 3.A.1.11.1) family. In terms of assembly, the complex is composed of two ATP-binding proteins (PotA), two transmembrane proteins (PotB and PotC) and a solute-binding protein (PotD).

The protein resides in the cell membrane. It carries out the reaction ATP + H2O + polyamine-[polyamine-binding protein]Side 1 = ADP + phosphate + polyamineSide 2 + [polyamine-binding protein]Side 1.. Its function is as follows. Part of the ABC transporter complex PotABCD involved in spermidine/putrescine import. Responsible for energy coupling to the transport system. This chain is Spermidine/putrescine import ATP-binding protein PotA, found in Bacillus anthracis.